Consider the following 596-residue polypeptide: Choline dehydrogenase, mitochondrial (596 aa).

The transit peptide at 1–34 (MWQVLRGWRKGWQSPRGALAWAVQGQPCPPCSRA) directs the protein to the mitochondrion. 44–73 (TFVVVGAGSAGCVLASRLTEDPNHRVLLLE) lines the FAD pocket. At Lys-438 the chain carries N6-succinyllysine. Residues Lys-486 and Lys-498 each carry the N6-acetyllysine; alternate modification. N6-succinyllysine; alternate occurs at positions 486 and 498. Catalysis depends on His-513, which acts as the Proton acceptor. An N6-acetyllysine modification is found at Lys-582.

It belongs to the GMC oxidoreductase family. It depends on FAD as a cofactor. Acetylation of Lys-498 is observed in liver mitochondria from fasted mice but not from fed mice.

It is found in the mitochondrion inner membrane. It carries out the reaction choline + A = betaine aldehyde + AH2. It functions in the pathway amine and polyamine biosynthesis; betaine biosynthesis via choline pathway; betaine aldehyde from choline (cytochrome c reductase route): step 1/1. The chain is Choline dehydrogenase, mitochondrial (Chdh) from Mus musculus (Mouse).